The following is a 206-amino-acid chain: Macrophage immunometabolism regulator (206 aa).

Met-1 carries the post-translational modification N-acetylmethionine. The disordered stretch occupies residues 1–41 (MEVDINGESRSTLTTLPFPGAEANSPGKAEAEKPRCSSTPC). 3 positions are modified to phosphoserine: Ser-25, Ser-140, and Ser-167.

This sequence belongs to the UNC119-binding protein family. Interacts with UNC119 and UNC119B; interaction preferentially takes place when UNC119 and UNC119B are unliganded with myristoylated proteins.

The protein localises to the cytoplasm. The protein resides in the cell projection. It localises to the cilium. Its function is as follows. Regulates the macrophage function, by enhancing the resolution of inflammation and wound repair functions mediated by M2 macrophages. The regulation of macrophage function is, due at least in part, to its ability to inhibit glycolysis. May also play a role in trafficking of proteins via its interaction with UNC119 and UNC119B cargo adapters: may help the release of UNC119 and UNC119B cargo or the recycling of UNC119 and UNC119B. May play a role in ciliary membrane localization via its interaction with UNC119B and protein transport into photoreceptor cells. The polypeptide is Macrophage immunometabolism regulator (MACIR) (Pongo abelii (Sumatran orangutan)).